A 524-amino-acid polypeptide reads, in one-letter code: MKKYVIVTGGVLSGIGKGIFSASLARLMKEHGVDVNVLKIDPYLNVDAGTMNPNQHGEVFVTEDGYEADLDLGHYERFLGRDMTRQNNMTAGQVYLRVIEKERQGKYLGNTVQIVPHLTEEIKDRIRALEAELLVVEIGGTVGDIEGEVFLEAVRELQMEEGKENFLFAHVTYVPYLRTTNEFKTKPTQQSVQLLRRIGITPDMVIVRSEFPLDVPSMNKVALFSGVPRDFVINLPDTKNVYEVPEILRDMGLHEKIASKLNVELKKSTFNWSYPKAFKPYRIALVGKYLGTDDAYKSIIESVFLTGIEKPTVVDSQMLEDMNDEEVKKVLDEYDALIIPGGFGRRGVEGKIKAIKYARENKKPILGICLGMQLMVIEFARNVFGYKEANSTEFDPNTPYPVVDLMEEQKRILKLGGTMRLGAQKVKIFPKTKLYEVYGGVEEVYERHRHRYEANEEAFPELFKKPGEEGYKLVVSAKSDFIEAVELEDHPFFVGVQFHPEYKSKVGAPHPIFVYLRKVLEGSQ.

The segment at 1–263 is amidoligase domain; it reads MKKYVIVTGG…HEKIASKLNV (263 aa). CTP is bound at residue S13. S13 lines the UTP pocket. ATP-binding positions include 14-19 and D71; that span reads GIGKGI. Mg(2+)-binding residues include D71 and E137. CTP contacts are provided by residues 144 to 146, 184 to 189, and K220; these read DIE and KTKPTQ. UTP-binding positions include 184-189 and K220; that span reads KTKPTQ. A Glutamine amidotransferase type-1 domain is found at 282 to 524; sequence RIALVGKYLG…YLRKVLEGSQ (243 aa). G342 lines the L-glutamine pocket. The Nucleophile; for glutamine hydrolysis role is filled by C369. L-glutamine contacts are provided by residues 370 to 373, E393, and R451; that span reads LGMQ. Active-site residues include H499 and E501.

This sequence belongs to the CTP synthase family. Homotetramer.

It catalyses the reaction UTP + L-glutamine + ATP + H2O = CTP + L-glutamate + ADP + phosphate + 2 H(+). It carries out the reaction L-glutamine + H2O = L-glutamate + NH4(+). The enzyme catalyses UTP + NH4(+) + ATP = CTP + ADP + phosphate + 2 H(+). Its pathway is pyrimidine metabolism; CTP biosynthesis via de novo pathway; CTP from UDP: step 2/2. Allosterically activated by GTP, when glutamine is the substrate; GTP has no effect on the reaction when ammonia is the substrate. The allosteric effector GTP functions by stabilizing the protein conformation that binds the tetrahedral intermediate(s) formed during glutamine hydrolysis. Inhibited by the product CTP, via allosteric rather than competitive inhibition. Its function is as follows. Catalyzes the ATP-dependent amination of UTP to CTP with either L-glutamine or ammonia as the source of nitrogen. Regulates intracellular CTP levels through interactions with the four ribonucleotide triphosphates. The protein is CTP synthase of Thermotoga maritima (strain ATCC 43589 / DSM 3109 / JCM 10099 / NBRC 100826 / MSB8).